The sequence spans 198 residues: Transcriptional regulator GfcR (198 aa).

This sequence belongs to the purine/pyrimidine phosphoribosyltransferase family. GfcR subfamily.

This chain is Transcriptional regulator GfcR, found in Methanospirillum hungatei JF-1 (strain ATCC 27890 / DSM 864 / NBRC 100397 / JF-1).